Reading from the N-terminus, the 414-residue chain is Imidazolonepropionase (414 aa).

Fe(3+) contacts are provided by H95 and H97. Residues H95 and H97 each coordinate Zn(2+). Positions 104, 162, and 189 each coordinate 4-imidazolone-5-propanoate. Y162 serves as a coordination point for N-formimidoyl-L-glutamate. H252 serves as a coordination point for Fe(3+). H252 serves as a coordination point for Zn(2+). Q255 serves as a coordination point for 4-imidazolone-5-propanoate. D326 contacts Fe(3+). Residue D326 coordinates Zn(2+). Positions 328 and 330 each coordinate N-formimidoyl-L-glutamate. S331 contacts 4-imidazolone-5-propanoate.

It belongs to the metallo-dependent hydrolases superfamily. HutI family. Requires Zn(2+) as cofactor. Fe(3+) serves as cofactor.

It localises to the cytoplasm. The enzyme catalyses 4-imidazolone-5-propanoate + H2O = N-formimidoyl-L-glutamate. It functions in the pathway amino-acid degradation; L-histidine degradation into L-glutamate; N-formimidoyl-L-glutamate from L-histidine: step 3/3. Its function is as follows. Catalyzes the hydrolytic cleavage of the carbon-nitrogen bond in imidazolone-5-propanoate to yield N-formimidoyl-L-glutamate. It is the third step in the universal histidine degradation pathway. This chain is Imidazolonepropionase, found in Streptomyces avermitilis (strain ATCC 31267 / DSM 46492 / JCM 5070 / NBRC 14893 / NCIMB 12804 / NRRL 8165 / MA-4680).